Reading from the N-terminus, the 122-residue chain is Large ribosomal subunit protein uL14 (122 aa).

It belongs to the universal ribosomal protein uL14 family. Part of the 50S ribosomal subunit. Forms a cluster with proteins L3 and L19. In the 70S ribosome, L14 and L19 interact and together make contacts with the 16S rRNA in bridges B5 and B8.

In terms of biological role, binds to 23S rRNA. Forms part of two intersubunit bridges in the 70S ribosome. The chain is Large ribosomal subunit protein uL14 from Desulforudis audaxviator (strain MP104C).